The sequence spans 122 residues: Small ribosomal subunit protein uS13 (122 aa).

The tract at residues G95–K122 is disordered.

This sequence belongs to the universal ribosomal protein uS13 family. As to quaternary structure, part of the 30S ribosomal subunit. Forms a loose heterodimer with protein S19. Forms two bridges to the 50S subunit in the 70S ribosome.

In terms of biological role, located at the top of the head of the 30S subunit, it contacts several helices of the 16S rRNA. In the 70S ribosome it contacts the 23S rRNA (bridge B1a) and protein L5 of the 50S subunit (bridge B1b), connecting the 2 subunits; these bridges are implicated in subunit movement. Contacts the tRNAs in the A and P-sites. The protein is Small ribosomal subunit protein uS13 of Corynebacterium glutamicum (strain ATCC 13032 / DSM 20300 / JCM 1318 / BCRC 11384 / CCUG 27702 / LMG 3730 / NBRC 12168 / NCIMB 10025 / NRRL B-2784 / 534).